We begin with the raw amino-acid sequence, 434 residues long: Protein FAM83A (434 aa).

The DUF1669 stretch occupies residues 1–298 (MSRSRHLGKI…LYASSKPVMG (298 aa)). Positions 76 to 97 (REPPCPPDTLGGAEAGPKGLDS) are disordered. Phosphoserine is present on residues Ser-301, Ser-327, Ser-348, and Ser-357. The disordered stretch occupies residues 308–399 (VPPGAAPANG…HDGPPAAVYS (92 aa)). Composition is skewed to low complexity over residues 320 to 332 (SSSS…RTSS) and 348 to 357 (SVSASSGPCS). Residues 358-369 (PAAPHPPPPPRF) are compositionally biased toward pro residues.

The protein belongs to the FAM83 family. Directly interacts (via DUF1669) with casein kinase isoforms CSNK1A1, CSNK1A1L, CSNK1D and CSNK1E. In terms of processing, phosphorylated upon EGFR activation in a breast cancer cell line.

Its subcellular location is the cytoplasm. In terms of biological role, involved in mitochondrial maintenance during adipogenesis. May be acting by playing a role in the maintenance of normal mitochondrial function. The chain is Protein FAM83A from Homo sapiens (Human).